A 732-amino-acid chain; its full sequence is E3 ubiquitin-protein ligase RNF19B (732 aa).

Residues 1-109 (MGSEKDSESP…PEEDEAAEGG (109 aa)) form a disordered region. The required for ubiquitin ligase activity and for protection against staurosporin-induced cell death stretch occupies residues 1–315 (MGSEKDSESP…VCGCEFCWLC (315 aa)). The span at 54–71 (AEPPPPAAPPPPPPPAPA) shows a compositional bias: pro residues. Residues 72–99 (PVEAQAPPVEALPSEPAAEAEAEAVAAG) show a composition bias toward low complexity. Positions 100–109 (PEEDEAAEGG) are enriched in acidic residues. The TRIAD supradomain stretch occupies residues 112-334 (EEVECPLCLV…LSPSGCTFWG (223 aa)). Cysteine 116, cysteine 119, cysteine 139, cysteine 142, cysteine 203, cysteine 208, cysteine 225, cysteine 230, cysteine 235, cysteine 238, histidine 243, cysteine 248, cysteine 284, and cysteine 287 together coordinate Zn(2+). The RING-type 1 zinc finger occupies 116–165 (CPLCLVRLPPERAPRLLSCPHRSCRDCLRHYLRLEISESRVPISCPECSE). The IBR-type zinc-finger motif lies at 183-248 (HKYEEFMLRR…KQIWHPNQTC (66 aa)). An RING-type 2; atypical zinc finger spans residues 284–315 (CPRCSAYIIKMNDGSCNHMTCAVCGCEFCWLC). Cysteine 299 is a catalytic residue. Zn(2+)-binding residues include cysteine 304, cysteine 307, cysteine 312, cysteine 315, histidine 323, and cysteine 330. A run of 2 helical transmembrane segments spans residues 351–371 (LIGA…AMVI) and 412–432 (VIAA…VYGV). Disordered regions lie at residues 598 to 644 (QLVS…QSCE) and 660 to 732 (QPES…YEVE). A compositionally biased stretch (acidic residues) spans 674–683 (QSDDVPDITS).

This sequence belongs to the RBR family. RNF19 subfamily. In terms of assembly, interacts with UBE2L3, UBE2L6 and UCKL1. As to expression, expressed specifically in natural killer cells, activated macrophages and cytotoxic T-cells. Present in macrophages (at protein level). Ubiquitously expressed with high expression in testis.

The protein resides in the cytoplasmic granule membrane. Its subcellular location is the endoplasmic reticulum membrane. It catalyses the reaction [E2 ubiquitin-conjugating enzyme]-S-ubiquitinyl-L-cysteine + [acceptor protein]-L-lysine = [E2 ubiquitin-conjugating enzyme]-L-cysteine + [acceptor protein]-N(6)-ubiquitinyl-L-lysine.. Its pathway is protein modification; protein ubiquitination. Functionally, E3 ubiquitin-protein ligase which accepts ubiquitin from E2 ubiquitin-conjugating enzymes UBE2L3 and UBE2L6 in the form of a thioester and then directly transfers the ubiquitin to targeted substrates, such as UCKL1. Involved in the cytolytic activity of natural killer cells and cytotoxic T-cells. Protects against staurosporin-induced cell death. The chain is E3 ubiquitin-protein ligase RNF19B (Rnf19b) from Mus musculus (Mouse).